A 205-amino-acid polypeptide reads, in one-letter code: Large ribosomal subunit protein uL3c (205 aa).

Residues 127 to 153 are disordered; it reads HFSRGPMSHGSKNHRQPGSIGAGTTPG.

Belongs to the universal ribosomal protein uL3 family. As to quaternary structure, part of the 50S ribosomal subunit.

The protein resides in the plastid. It localises to the chloroplast. One of the primary rRNA binding proteins, it binds directly near the 3'-end of the 23S rRNA, where it nucleates assembly of the 50S subunit. The protein is Large ribosomal subunit protein uL3c (rpl3) of Porphyra purpurea (Red seaweed).